The primary structure comprises 349 residues: Succinylglutamate desuccinylase (349 aa).

The Zn(2+) site is built by histidine 70, glutamate 73, and histidine 166. Glutamate 229 is an active-site residue.

This sequence belongs to the AspA/AstE family. Succinylglutamate desuccinylase subfamily. Zn(2+) is required as a cofactor.

The enzyme catalyses N-succinyl-L-glutamate + H2O = L-glutamate + succinate. It participates in amino-acid degradation; L-arginine degradation via AST pathway; L-glutamate and succinate from L-arginine: step 5/5. Its function is as follows. Transforms N(2)-succinylglutamate into succinate and glutamate. This is Succinylglutamate desuccinylase from Burkholderia thailandensis (strain ATCC 700388 / DSM 13276 / CCUG 48851 / CIP 106301 / E264).